The following is a 216-amino-acid chain: Ras-related protein Rab-5C (216 aa).

GTP contacts are provided by Ser30, Ala31, Gly33, Lys34, Ser35, Ser36, His47, Glu48, Thr53, and Gly79. Ser35 serves as a coordination point for Mg(2+). 2 short sequence motifs (switch) span residues 45 to 57 (QFHE…IGAA) and 78 to 94 (AGQE…YRGA). Thr53 contacts Mg(2+). Phosphoserine is present on Ser85. GTP is bound by residues Asn134, Lys135, Asp137, Ala165, and Lys166. Residues 185-216 (NEPQNAAGAPGRTRGVDLQESNPASRSQCCSN) form a disordered region. The segment covering 203–216 (QESNPASRSQCCSN) has biased composition (polar residues). 2 S-geranylgeranyl cysteine lipidation sites follow: Cys213 and Cys214.

It belongs to the small GTPase superfamily. Rab family. Interacts with EEA1 and INCA1. Interacts with GDI1, GDI2, CHML and CHM; phosphorylation at Ser-85 disrupts this interaction. Mg(2+) is required as a cofactor. Post-translationally, phosphorylation of Ser-85 in the switch II region by LRRK2 prevents the association of RAB regulatory proteins, including CHM, CHML and RAB GDP dissociation inhibitors GDI1 and GDI2.

Its subcellular location is the cell membrane. The protein resides in the early endosome membrane. The protein localises to the melanosome. The enzyme catalyses GTP + H2O = GDP + phosphate + H(+). With respect to regulation, regulated by guanine nucleotide exchange factors (GEFs) which promote the exchange of bound GDP for free GTP. Regulated by GTPase activating proteins (GAPs) which increase the GTP hydrolysis activity. Inhibited by GDP dissociation inhibitors (GDIs). Functionally, the small GTPases Rab are key regulators of intracellular membrane trafficking, from the formation of transport vesicles to their fusion with membranes. Rabs cycle between an inactive GDP-bound form and an active GTP-bound form that is able to recruit to membranes different sets of downstream effectors directly responsible for vesicle formation, movement, tethering and fusion. The polypeptide is Ras-related protein Rab-5C (Mus musculus (Mouse)).